We begin with the raw amino-acid sequence, 118 residues long: Transcription factor PAR1 (118 aa).

Positions 1 to 58 (MEETLATPDATRRSLSPSCSATVKSRAAGFERRTKRRLSETNASVREDREEAEEEEDE) are disordered. Over residues 13 to 23 (RSLSPSCSATV) the composition is skewed to polar residues. The bHLH domain occupies 43-92 (ASVREDREEAEEEEDEVKEKIEALQRIIPGGAALGVDALFEETAGYILSL).

This sequence belongs to the bHLH protein family. As to quaternary structure, homodimer.

It is found in the nucleus. Atypical bHLH transcription factor that acts as a negative regulator of a variety of shade avoidance syndrome (SAS) responses, including seedling elongation and photosynthetic pigment accumulation. Acts as a direct transcriptional repressor of two auxin-responsive genes, SAUR15 and SAUR68. May function in integrating shade and hormone transcriptional networks in response to light and auxin changes. The chain is Transcription factor PAR1 (PAR1) from Arabidopsis thaliana (Mouse-ear cress).